Here is a 213-residue protein sequence, read N- to C-terminus: Ribonuclease HII (213 aa).

Residues 1–206 (MICGVDEAGK…VSTLLAKKTQ (206 aa)) form the RNase H type-2 domain. Residues D6, E7, and D101 each coordinate a divalent metal cation.

The protein belongs to the RNase HII family. The cofactor is Mn(2+). Requires Mg(2+) as cofactor.

The protein localises to the cytoplasm. It catalyses the reaction Endonucleolytic cleavage to 5'-phosphomonoester.. In terms of biological role, endonuclease that specifically degrades the RNA of RNA-DNA hybrids. The protein is Ribonuclease HII of Methanoregula boonei (strain DSM 21154 / JCM 14090 / 6A8).